The chain runs to 390 residues: uncharacterized protein (390 aa).

This is an uncharacterized protein from Archaeoglobus fulgidus (strain ATCC 49558 / DSM 4304 / JCM 9628 / NBRC 100126 / VC-16).